A 330-amino-acid chain; its full sequence is Global transcription regulator sge1 (330 aa).

Disordered regions lie at residues 93-123 (PPGE…RNSV) and 239-306 (QYAP…HQPQ). Residues 105 to 114 (GKSTTQSGGI) show a composition bias toward polar residues. A compositionally biased stretch (low complexity) spans 250–306 (QQPALQQQPQQQPQPQHQPQLQYQPQPHQHQPQLQYQPQQQHQPQQQYRPQPQHQPQ).

This sequence belongs to the MIT1/WOR1 family.

Its subcellular location is the nucleus. Its function is as follows. Global transcriptional regulator of pathogenicity. Acts as an activator of parasitic growth. Not essential for colonization or penetration of the root surface, but required for expression of genes encoding effectors that are secreted during infection. Involved in conidiogenesis, but is not required for conidial fitness, overall (colony) morphology, vegetative growth or carbon source utilization. This chain is Global transcription regulator sge1, found in Fusarium oxysporum f. sp. lycopersici (strain 4287 / CBS 123668 / FGSC 9935 / NRRL 34936) (Fusarium vascular wilt of tomato).